The chain runs to 406 residues: 5-methylthioadenosine/S-adenosylhomocysteine deaminase (406 aa).

2 residues coordinate Zn(2+): His55 and His57. Residues Glu84, Arg136, Arg148, and His173 each contribute to the substrate site. His200 contributes to the Zn(2+) binding site. Positions 203 and 279 each coordinate substrate. Residue Asp279 participates in Zn(2+) binding.

The protein belongs to the metallo-dependent hydrolases superfamily. MTA/SAH deaminase family. Zn(2+) serves as cofactor.

It catalyses the reaction S-adenosyl-L-homocysteine + H2O + H(+) = S-inosyl-L-homocysteine + NH4(+). The catalysed reaction is S-methyl-5'-thioadenosine + H2O + H(+) = S-methyl-5'-thioinosine + NH4(+). Its function is as follows. Catalyzes the deamination of 5-methylthioadenosine and S-adenosyl-L-homocysteine into 5-methylthioinosine and S-inosyl-L-homocysteine, respectively. Is also able to deaminate adenosine. Adenosine-5-monophosphate (AMP) and S-adenosyl-L-methionine (SAM) are not enzyme substrates. This is 5-methylthioadenosine/S-adenosylhomocysteine deaminase (mtaD) from Thermotoga maritima (strain ATCC 43589 / DSM 3109 / JCM 10099 / NBRC 100826 / MSB8).